We begin with the raw amino-acid sequence, 200 residues long: MPIGTPSVPYRLPGSQFERWVDIYTRLGAERILFLGQEVNDGIANSLVAQMLYLDSEDSSKPIYLYINSPGGSVTAGLAIYDTMKYVKSDLVTICVGLAASMGAFLLSAGTKGKRLALPHSRIMIHQPLGGTAQRQASDIEIEAREILRIKEMLNKSMAEMTGQTYEKIEKDTDRDYFLSAEEAKNYGLIDRVITHPSES.

Residue Ser-101 is the Nucleophile of the active site. The active site involves His-126.

This sequence belongs to the peptidase S14 family. In terms of assembly, fourteen ClpP subunits assemble into 2 heptameric rings which stack back to back to give a disk-like structure with a central cavity, resembling the structure of eukaryotic proteasomes.

The protein localises to the cytoplasm. It catalyses the reaction Hydrolysis of proteins to small peptides in the presence of ATP and magnesium. alpha-casein is the usual test substrate. In the absence of ATP, only oligopeptides shorter than five residues are hydrolyzed (such as succinyl-Leu-Tyr-|-NHMec, and Leu-Tyr-Leu-|-Tyr-Trp, in which cleavage of the -Tyr-|-Leu- and -Tyr-|-Trp bonds also occurs).. Functionally, cleaves peptides in various proteins in a process that requires ATP hydrolysis. Has a chymotrypsin-like activity. Plays a major role in the degradation of misfolded proteins. The chain is ATP-dependent Clp protease proteolytic subunit 2 from Prochlorococcus marinus (strain NATL2A).